The following is a 122-amino-acid chain: Large ribosomal subunit protein uL14 (122 aa).

It belongs to the universal ribosomal protein uL14 family. As to quaternary structure, part of the 50S ribosomal subunit. Forms a cluster with proteins L3 and L19. In the 70S ribosome, L14 and L19 interact and together make contacts with the 16S rRNA in bridges B5 and B8.

Functionally, binds to 23S rRNA. Forms part of two intersubunit bridges in the 70S ribosome. The polypeptide is Large ribosomal subunit protein uL14 (Mycobacterium ulcerans (strain Agy99)).